A 395-amino-acid chain; its full sequence is S-adenosylmethionine synthase (395 aa).

His14 provides a ligand contact to ATP. Asp16 is a binding site for Mg(2+). Glu42 is a binding site for K(+). 2 residues coordinate L-methionine: Glu55 and Gln98. Residues 98–108 are flexible loop; sequence QSPDIAMGVNK. ATP is bound by residues 174 to 176, 240 to 241, Asp249, 255 to 256, Ala272, and Lys276; these read DGK, RF, and RK. Asp249 contributes to the L-methionine binding site. Lys280 contributes to the L-methionine binding site.

It belongs to the AdoMet synthase family. In terms of assembly, homotetramer; dimer of dimers. The cofactor is Mg(2+). K(+) serves as cofactor.

It is found in the cytoplasm. The enzyme catalyses L-methionine + ATP + H2O = S-adenosyl-L-methionine + phosphate + diphosphate. It participates in amino-acid biosynthesis; S-adenosyl-L-methionine biosynthesis; S-adenosyl-L-methionine from L-methionine: step 1/1. Functionally, catalyzes the formation of S-adenosylmethionine (AdoMet) from methionine and ATP. The overall synthetic reaction is composed of two sequential steps, AdoMet formation and the subsequent tripolyphosphate hydrolysis which occurs prior to release of AdoMet from the enzyme. This is S-adenosylmethionine synthase from Caldanaerobacter subterraneus subsp. tengcongensis (strain DSM 15242 / JCM 11007 / NBRC 100824 / MB4) (Thermoanaerobacter tengcongensis).